Here is a 106-residue protein sequence, read N- to C-terminus: Defensin-like protein 1 (106 aa).

Residues 1–25 (MARSLCFMAFAVLAMMLFVAYEVQA) form the signal peptide. 4 disulfides stabilise this stretch: cysteine 29-cysteine 73, cysteine 40-cysteine 60, cysteine 46-cysteine 67, and cysteine 50-cysteine 69.

This sequence belongs to the DEFL family.

It is found in the secreted. Its subcellular location is the vacuole. This is Defensin-like protein 1 (THIO1) from Nicotiana paniculata.